A 90-amino-acid chain; its full sequence is Small ribosomal subunit protein uS15c (90 aa).

It belongs to the universal ribosomal protein uS15 family. As to quaternary structure, part of the 30S ribosomal subunit.

The protein localises to the plastid. It localises to the chloroplast. This chain is Small ribosomal subunit protein uS15c (rps15), found in Lotus japonicus (Lotus corniculatus var. japonicus).